We begin with the raw amino-acid sequence, 89 residues long: Small ribosomal subunit protein uS14 (89 aa).

This sequence belongs to the universal ribosomal protein uS14 family. As to quaternary structure, part of the 30S ribosomal subunit. Contacts proteins S3 and S10.

In terms of biological role, binds 16S rRNA, required for the assembly of 30S particles and may also be responsible for determining the conformation of the 16S rRNA at the A site. This is Small ribosomal subunit protein uS14 from Akkermansia muciniphila (strain ATCC BAA-835 / DSM 22959 / JCM 33894 / BCRC 81048 / CCUG 64013 / CIP 107961 / Muc).